The following is a 170-amino-acid chain: Ribosome maturation factor RimM (170 aa).

One can recognise a PRC barrel domain in the interval 97–170 (HPDEYYWVDL…RIVVDWDPEF (74 aa)).

It belongs to the RimM family. Binds ribosomal protein uS19.

It is found in the cytoplasm. In terms of biological role, an accessory protein needed during the final step in the assembly of 30S ribosomal subunit, possibly for assembly of the head region. Essential for efficient processing of 16S rRNA. May be needed both before and after RbfA during the maturation of 16S rRNA. It has affinity for free ribosomal 30S subunits but not for 70S ribosomes. The polypeptide is Ribosome maturation factor RimM (Xylella fastidiosa (strain M12)).